The sequence spans 528 residues: Glucose-6-phosphate isomerase (528 aa).

Glu-322 functions as the Proton donor in the catalytic mechanism. Active-site residues include His-351 and Lys-455.

The protein belongs to the GPI family.

Its subcellular location is the cytoplasm. It carries out the reaction alpha-D-glucose 6-phosphate = beta-D-fructose 6-phosphate. It functions in the pathway carbohydrate biosynthesis; gluconeogenesis. Its pathway is carbohydrate degradation; glycolysis; D-glyceraldehyde 3-phosphate and glycerone phosphate from D-glucose: step 2/4. In terms of biological role, catalyzes the reversible isomerization of glucose-6-phosphate to fructose-6-phosphate. In Synechococcus elongatus (strain ATCC 33912 / PCC 7942 / FACHB-805) (Anacystis nidulans R2), this protein is Glucose-6-phosphate isomerase.